A 179-amino-acid polypeptide reads, in one-letter code: Putative cleavage and polyadenylation specificity factor subunit 4-like protein (179 aa).

C3H1-type zinc fingers lie at residues 35–61 (KSASAVCNFFTKGLCEKGKLCPFRHDR), 62–89 (GEKMVVCKHWLRGLCKKGDHCKFLHQYD), 90–117 (LTRMPECYFYSKFGDCSNKECSFLHVKP), 118–145 (AFKSQDCPWYDQGFCKDGPLCKYRHVPR), and 146–169 (IMCLNYLVGFCPEGPKCQFAQKIR).

This sequence belongs to the CPSF4/YTH1 family.

The chain is Putative cleavage and polyadenylation specificity factor subunit 4-like protein (CPSF4L) from Homo sapiens (Human).